Consider the following 315-residue polypeptide: Glycine--tRNA ligase alpha subunit (315 aa).

It belongs to the class-II aminoacyl-tRNA synthetase family. In terms of assembly, tetramer of two alpha and two beta subunits.

The protein resides in the cytoplasm. The catalysed reaction is tRNA(Gly) + glycine + ATP = glycyl-tRNA(Gly) + AMP + diphosphate. This chain is Glycine--tRNA ligase alpha subunit, found in Sorangium cellulosum (strain So ce56) (Polyangium cellulosum (strain So ce56)).